Reading from the N-terminus, the 215-residue chain is Adenylate kinase (215 aa).

10–15 (GAGKGT) contributes to the ATP binding site. The NMP stretch occupies residues 30–59 (STGDMLRAAIKAGTPLGLEAKKIIDEGGLV). Residues T31, R36, 57-59 (GLV), 85-88 (GFPR), and Q92 contribute to the AMP site. The interval 122–159 (GRRVHLASGRTYHVTYNPPKVEGKDDVTGEDLIQRDDD) is LID. ATP-binding positions include R123 and 132–133 (TY). AMP contacts are provided by R156 and R167. Residue Q200 coordinates ATP.

This sequence belongs to the adenylate kinase family. As to quaternary structure, monomer.

It is found in the cytoplasm. The enzyme catalyses AMP + ATP = 2 ADP. It functions in the pathway purine metabolism; AMP biosynthesis via salvage pathway; AMP from ADP: step 1/1. Its function is as follows. Catalyzes the reversible transfer of the terminal phosphate group between ATP and AMP. Plays an important role in cellular energy homeostasis and in adenine nucleotide metabolism. The sequence is that of Adenylate kinase from Neisseria meningitidis serogroup C (strain 053442).